Here is a 1396-residue protein sequence, read N- to C-terminus: Probable ATP-dependent RNA helicase spindle-E (1396 aa).

The tract at residues 1-34 (MDEAAGPSTSRTSNLEDVDDEGASLAEEDEEHTK) is disordered. A compositionally biased stretch (acidic residues) spans 16–30 (EDVDDEGASLAEEDE). Positions 68 to 234 (LDKIRSNAVV…FKIPKKSGYL (167 aa)) constitute a Helicase ATP-binding domain. 81 to 88 (GATGCGKT) is a binding site for ATP. Residues 180–183 (DEVH) carry the DEAH box motif. Residues 292 to 468 (KGQEFGDSLE…TVVLKAKLLE (177 aa)) enclose the Helicase C-terminal domain. The region spanning 885–950 (NFAMGQMVAA…RQLDDSLGQL (66 aa)) is the Tudor domain.

The protein belongs to the DEAD box helicase family. DEAH subfamily.

The protein resides in the cytoplasm. It carries out the reaction ATP + H2O = ADP + phosphate + H(+). Functionally, probable ATP-binding RNA helicase which plays a central role during gametogenesis by repressing transposable elements and preventing their mobilization, which is essential for the germline integrity. Acts via the piRNA metabolic process, which mediates the repression of transposable elements during meiosis by forming complexes composed of piRNAs and Piwi proteins and govern the methylation and subsequent repression of transposons. The sequence is that of Probable ATP-dependent RNA helicase spindle-E (spn-E) from Culex quinquefasciatus (Southern house mosquito).